Consider the following 2063-residue polypeptide: Nuclear receptor coactivator 6 (2063 aa).

A TBP/GTF2A-binding region region spans residues methionine 1 to glutamine 928. A CREBBP-binding region region spans residues methionine 1–proline 1057. The interval methionine 1–valine 1310 is NCOA1-binding region. The residue at position 95 (arginine 95) is an Asymmetric dimethylarginine. 3 disordered regions span residues isoleucine 184 to glutamine 251, glutamine 281 to leucine 549, and arginine 789 to aspartate 811. Over residues glutamine 281 to glutamine 300 the composition is skewed to low complexity. Composition is skewed to polar residues over residues methionine 353–threonine 368, glycine 379–serine 406, proline 417–methionine 453, proline 462–glutamine 502, and glycine 522–leucine 549. The NCOA6IP-binding region stretch occupies residues valine 773–glutamine 927. Serine 884 carries the post-translational modification Phosphoserine; by MAPK; in vitro. The LXXLL motif 1 signature appears at leucine 887–leucine 891. 3 disordered regions span residues histidine 899–threonine 1278, valine 1310–lysine 1353, and glutamate 1448–glutamate 1474. Residues asparagine 903–asparagine 912 show a composition bias toward low complexity. Residues lysine 913–asparagine 925 show a composition bias toward basic residues. A compositionally biased stretch (low complexity) spans proline 982 to glutamine 992. A compositionally biased stretch (pro residues) spans alanine 995–glutamine 1020. Residues proline 1021–glutamine 1041 are compositionally biased toward low complexity. Residues arginine 1047 and arginine 1058 each carry the asymmetric dimethylarginine modification. Positions proline 1063–serine 1075 are enriched in polar residues. Residue arginine 1096 is modified to Asymmetric dimethylarginine. Polar residues-rich tracts occupy residues proline 1104 to proline 1125, leucine 1173 to serine 1191, and alanine 1202 to arginine 1214. The span at proline 1219 to threonine 1232 shows a compositional bias: pro residues. A compositionally biased stretch (polar residues) spans valine 1310–alanine 1320. The span at lysine 1322–glycine 1345 shows a compositional bias: low complexity. Positions leucine 1491–leucine 1495 match the LXXLL motif 2 motif. The interval serine 1641–lysine 2063 is EP300/CRSP3-binding region. Residues alanine 1738–valine 1820 form a disordered region. The segment covering serine 1750–valine 1763 has biased composition (low complexity). Residues proline 1773–threonine 1798 show a composition bias toward polar residues. A compositionally biased stretch (low complexity) spans asparagine 1799 to lysine 1815. An N6-acetyllysine mark is found at lysine 1819 and lysine 1822. Disordered stretches follow at residues glycine 1837–glycine 1908 and isoleucine 1995–lysine 2063. The span at glutamate 2002–lysine 2011 shows a compositional bias: basic and acidic residues. Serine 2018 carries the post-translational modification Phosphoserine.

In terms of assembly, monomer and homodimer. Interacts with RBM39. Interacts in vitro with the basal transcription factors GTF2A and TBP, suggesting an autonomous transactivation function. Interacts with NCOA1, CRSP3, RBM14, the histone acetyltransferases EP300 and CREBBP, and with the methyltransferases NCOA6IP and PRMT2/HRMT1L1. Component of the MLL2/3 complex (also named ASCOM complex), at least composed of KMT2D/MLL2 or KMT2C/MLL3, ASH2L, RBBP5, WDR5, NCOA6, DPY30, KDM6A, PAXIP1/PTIP, PAGR1 and alpha- and beta-tubulin. Interacts with ZNF335; may enhance ligand-dependent transcriptional activation by nuclear hormone receptors. Phosphorylated by PRKDC. Post-translationally, phosphorylation on Ser-884 leads to a strong decrease in binding to ESR1 and ESR2. As to expression, ubiquitous. Highly expressed in brain, prostate, testis and ovary; weakly expressed in lung, thymus and small intestine.

It is found in the nucleus. Functionally, nuclear receptor coactivator that directly binds nuclear receptors and stimulates the transcriptional activities in a hormone-dependent fashion. Coactivates expression in an agonist- and AF2-dependent manner. Involved in the coactivation of different nuclear receptors, such as for steroids (GR and ERs), retinoids (RARs and RXRs), thyroid hormone (TRs), vitamin D3 (VDR) and prostanoids (PPARs). Probably functions as a general coactivator, rather than just a nuclear receptor coactivator. May also be involved in the coactivation of the NF-kappa-B pathway. May coactivate expression via a remodeling of chromatin and its interaction with histone acetyltransferase proteins. In Homo sapiens (Human), this protein is Nuclear receptor coactivator 6 (NCOA6).